A 460-amino-acid chain; its full sequence is DNA repair protein RadA (460 aa).

The C4-type zinc-finger motif lies at 11-28; that stretch reads CNECGADYPRWQGQCSAC. 102 to 109 contacts ATP; it reads GNPGAGKS. The short motif at 258–262 is the RadA KNRFG motif element; it reads KNRFG. The interval 357–460 is lon-protease-like; it reads DVFVNVVGGV…SDALSVFDDL (104 aa).

It belongs to the RecA family. RadA subfamily.

Functionally, DNA-dependent ATPase involved in processing of recombination intermediates, plays a role in repairing DNA breaks. Stimulates the branch migration of RecA-mediated strand transfer reactions, allowing the 3' invading strand to extend heteroduplex DNA faster. Binds ssDNA in the presence of ADP but not other nucleotides, has ATPase activity that is stimulated by ssDNA and various branched DNA structures, but inhibited by SSB. Does not have RecA's homology-searching function. Genetic experiments involving combination of radA mutations with mutations in recA, recB, recG, recJ, recQ, ruvA and ruvC show it plays a role in recombination and recombinational repair, probably involving stabilizing or processing branched DNA or blocked replication forks. Is genetically synergistic to RecG and RuvABC. May be involved in recovery of genetic rearrangements during replication fork breakdown. In combination with RadD is important in recovery from double-strand DNA breaks (DSB). This Escherichia coli (strain K12) protein is DNA repair protein RadA.